A 245-amino-acid polypeptide reads, in one-letter code: DNA polymerase sliding clamp 1 (245 aa).

It belongs to the PCNA family. As to quaternary structure, homotrimer. The subunits circularize to form a toroid; DNA passes through its center. Replication factor C (RFC) is required to load the toroid on the DNA.

Functionally, sliding clamp subunit that acts as a moving platform for DNA processing. Responsible for tethering the catalytic subunit of DNA polymerase and other proteins to DNA during high-speed replication. This is DNA polymerase sliding clamp 1 from Sulfurisphaera ohwakuensis.